A 269-amino-acid chain; its full sequence is CCAAT/enhancer-binding protein delta (269 aa).

3 disordered regions span residues 1 to 48, 97 to 133, and 151 to 219; these read MSAA…PGAA, PLEL…APGS, and AAGQ…NQEM. Position 2 is an N-acetylserine (Ser-2). Composition is skewed to low complexity over residues 36–48 and 97–107; these read GAEP…PGAA and PLELLPGGPAR. Residue Lys-120 forms a Glycyl lysine isopeptide (Lys-Gly) (interchain with G-Cter in SUMO) linkage. Residues 155 to 175 are compositionally biased toward pro residues; it reads PTPPTSPEPPRSSPRQTPAPG. Residues 177–201 are compositionally biased toward basic and acidic residues; that stretch reads AREKSAGKRGPDRGSPEYRQRRERN. A bZIP domain is found at 191–254; it reads SPEYRQRRER…AGLRQFFKQL (64 aa). The basic motif stretch occupies residues 195 to 222; the sequence is RQRRERNNIAVRKSRDKAKRRNQEMQQK. Positions 226–254 are leucine-zipper; that stretch reads LSAENEKLHQRVEQLTRDLAGLRQFFKQL.

This sequence belongs to the bZIP family. C/EBP subfamily. In terms of assembly, binds DNA as a homodimer and as a heterodimer. Can form stable heterodimers with CEBPB. Can form stable heterodimers with CEBPA and CEBPE. Directly interacts with SPI1/PU.1; this interaction does not affect DNA-binding properties of each partner. Interacts with PRDM16.

The protein resides in the nucleus. Transcription activator that recognizes two different DNA motifs: the CCAAT homology common to many promoters and the enhanced core homology common to many enhancers. Important transcription factor regulating the expression of genes involved in immune and inflammatory responses. Transcriptional activator that enhances IL6 transcription alone and as heterodimer with CEBPB. The polypeptide is CCAAT/enhancer-binding protein delta (CEBPD) (Homo sapiens (Human)).